We begin with the raw amino-acid sequence, 396 residues long: Acetate kinase (396 aa).

Residue N7 participates in Mg(2+) binding. K14 provides a ligand contact to ATP. R86 is a substrate binding site. D143 (proton donor/acceptor) is an active-site residue. ATP contacts are provided by residues 203-207, 277-279, and 325-329; these read HLGNG, DMR, and GIGEH. Mg(2+) is bound at residue E380.

This sequence belongs to the acetokinase family. Homodimer. Mg(2+) serves as cofactor. Mn(2+) is required as a cofactor.

It is found in the cytoplasm. The enzyme catalyses acetate + ATP = acetyl phosphate + ADP. The protein operates within metabolic intermediate biosynthesis; acetyl-CoA biosynthesis; acetyl-CoA from acetate: step 1/2. Catalyzes the formation of acetyl phosphate from acetate and ATP. Can also catalyze the reverse reaction. The polypeptide is Acetate kinase (Sulfurovum sp. (strain NBC37-1)).